Consider the following 100-residue polypeptide: Large ribosomal subunit protein bL28 (100 aa).

The protein belongs to the bacterial ribosomal protein bL28 family.

The sequence is that of Large ribosomal subunit protein bL28 from Gluconobacter oxydans (strain 621H) (Gluconobacter suboxydans).